The primary structure comprises 335 residues: Glycerol-3-phosphate dehydrogenase [NAD(P)+] (335 aa).

NADPH is bound by residues serine 15, tyrosine 16, histidine 36, and lysine 110. Residues lysine 110, glycine 139, and threonine 141 each contribute to the sn-glycerol 3-phosphate site. Residue alanine 143 participates in NADPH binding. Sn-glycerol 3-phosphate contacts are provided by lysine 195, aspartate 248, serine 258, arginine 259, and asparagine 260. Lysine 195 (proton acceptor) is an active-site residue. NADPH is bound at residue arginine 259. NADPH contacts are provided by valine 283 and glutamate 285.

Belongs to the NAD-dependent glycerol-3-phosphate dehydrogenase family.

The protein resides in the cytoplasm. It carries out the reaction sn-glycerol 3-phosphate + NAD(+) = dihydroxyacetone phosphate + NADH + H(+). The catalysed reaction is sn-glycerol 3-phosphate + NADP(+) = dihydroxyacetone phosphate + NADPH + H(+). Its pathway is membrane lipid metabolism; glycerophospholipid metabolism. Catalyzes the reduction of the glycolytic intermediate dihydroxyacetone phosphate (DHAP) to sn-glycerol 3-phosphate (G3P), the key precursor for phospholipid synthesis. The chain is Glycerol-3-phosphate dehydrogenase [NAD(P)+] from Haemophilus influenzae (strain 86-028NP).